The chain runs to 92 residues: Defensin (92 aa).

The first 20 residues, 1–20, serve as a signal peptide directing secretion; it reads MKFFVLVAIAFALLACVAQA. The propeptide occupies 21-52; the sequence is QPVSDVDPIPEDHVLVHEDAHQEVLQHSRQKR. Intrachain disulfides connect C55/C82, C68/C88, and C72/C90.

The protein belongs to the invertebrate defensin family. Type 1 subfamily. In terms of tissue distribution, hemolymph (at protein level).

The protein localises to the secreted. In terms of biological role, responsible for the anti Gram-positive activity of immune hemolymph. Expressed in the absence of immune challenge during metamorphosis. The chain is Defensin (Def) from Drosophila melanogaster (Fruit fly).